The chain runs to 269 residues: Interleukin-1 beta (269 aa).

Residues 1–116 constitute a propeptide, removed in mature form; by CASP1; it reads MAEVPELASE…TWDNEAYVHD (116 aa). Positions 228-241 match the Involved in interaction with TMED10 C-terminus motif; sequence FESAQFPNWYISTS.

Belongs to the IL-1 family. In terms of assembly, monomer. In its precursor form, weakly interacts with full-length MEFV; the mature cytokine does not interact at all. Interacts with integrins ITGAV:ITGBV and ITGA5:ITGB1; integrin-binding is required for IL1B signaling. Interacts with cargo receptor TMED10; the interaction is direct and is required for the secretion of IL1B mature form. Interacts with HSP90AB1; the interaction facilitates cargo translocation into the ERGIC. Interacts with HSP90B1; the interaction facilitates cargo translocation into the ERGIC. In terms of processing, activation of the IL1B precursor involves a CASP1-catalyzed proteolytic cleavage. Processing and secretion are temporarily associated. (Microbial infection) Cleavage by S.pyogenes cysteine protease SpeB promotes its activation independently of CASP1. In terms of tissue distribution, expressed in activated monocytes/macrophages (at protein level).

Its subcellular location is the cytoplasm. The protein resides in the cytosol. It is found in the secreted. The protein localises to the lysosome. It localises to the extracellular exosome. (Microbial infection) Cleavage by S.pyogenes cysteine protease SpeB promotes its activation independently of CASP1. SpeB-mediated maturation of IL1B plays a dual role depending on infection site: while IL1B inflammatory response prevents bacterial growth during invasive skin infections, it promotes streptococcal infection of the nasopharynx by disrupting colonization resistance mediated by the microbiota. In terms of biological role, potent pro-inflammatory cytokine. Initially discovered as the major endogenous pyrogen, induces prostaglandin synthesis, neutrophil influx and activation, T-cell activation and cytokine production, B-cell activation and antibody production, and fibroblast proliferation and collagen production. Promotes Th17 differentiation of T-cells. Synergizes with IL12/interleukin-12 to induce IFNG synthesis from T-helper 1 (Th1) cells. Plays a role in angiogenesis by inducing VEGF production synergistically with TNF and IL6. Involved in transduction of inflammation downstream of pyroptosis: its mature form is specifically released in the extracellular milieu by passing through the gasdermin-D (GSDMD) pore. Acts as a sensor of S.pyogenes infection in skin: cleaved and activated by pyogenes SpeB protease, leading to an inflammatory response that prevents bacterial growth during invasive skin infection. In Homo sapiens (Human), this protein is Interleukin-1 beta.